We begin with the raw amino-acid sequence, 292 residues long: Large ribosomal subunit protein mL67 (292 aa).

The interval 59 to 83 is disordered; it reads VELKSPSRLQLKSEPGNKGNPKGHG.

This sequence belongs to the mitochondrion-specific ribosomal protein mL67 family. In terms of assembly, component of the mitochondrial large ribosomal subunit (mt-LSU). Mature N.crassa 74S mitochondrial ribosomes consist of a small (37S) and a large (54S) subunit. The 37S small subunit contains a 16S ribosomal RNA (16S mt-rRNA) and 32 different proteins. The 54S large subunit contains a 23S rRNA (23S mt-rRNA) and 42 different proteins.

It localises to the mitochondrion. Its function is as follows. Component of the mitochondrial ribosome (mitoribosome), a dedicated translation machinery responsible for the synthesis of mitochondrial genome-encoded proteins, including at least some of the essential transmembrane subunits of the mitochondrial respiratory chain. The mitoribosomes are attached to the mitochondrial inner membrane and translation products are cotranslationally integrated into the membrane. mL67/MHR1 also has extraribosomal functions, being involved in regulation of mitochondrial DNA recombination, maintenance and repair, and generation of homoplasmic cells. mL67/MHR1 also acts as a transcription factor involved in regulation of RNA polymerase II-dependent transcription. This Neurospora crassa (strain ATCC 24698 / 74-OR23-1A / CBS 708.71 / DSM 1257 / FGSC 987) protein is Large ribosomal subunit protein mL67 (mhr1).